The following is a 251-amino-acid chain: tRNA (guanine-N(7)-)-methyltransferase (251 aa).

Glutamate 69, glutamate 94, aspartate 121, and aspartate 143 together coordinate S-adenosyl-L-methionine. Aspartate 143 is an active-site residue. The substrate site is built by lysine 147 and aspartate 179.

This sequence belongs to the class I-like SAM-binding methyltransferase superfamily. TrmB family.

It catalyses the reaction guanosine(46) in tRNA + S-adenosyl-L-methionine = N(7)-methylguanosine(46) in tRNA + S-adenosyl-L-homocysteine. The protein operates within tRNA modification; N(7)-methylguanine-tRNA biosynthesis. Catalyzes the formation of N(7)-methylguanine at position 46 (m7G46) in tRNA. This is tRNA (guanine-N(7)-)-methyltransferase from Rhodopseudomonas palustris (strain BisB18).